A 530-amino-acid chain; its full sequence is Autoinducer-2 kinase (530 aa).

Belongs to the FGGY kinase family.

The protein resides in the cytoplasm. It carries out the reaction (S)-4,5-dihydroxypentane-2,3-dione + ATP = (2S)-2-hydroxy-3,4-dioxopentyl phosphate + ADP + H(+). Catalyzes the phosphorylation of autoinducer-2 (AI-2) to phospho-AI-2, which subsequently inactivates the transcriptional regulator LsrR and leads to the transcription of the lsr operon. Phosphorylates the ring-open form of (S)-4,5-dihydroxypentane-2,3-dione (DPD), which is the precursor to all AI-2 signaling molecules, at the C5 position. This chain is Autoinducer-2 kinase, found in Escherichia coli O9:H4 (strain HS).